The following is a 380-amino-acid chain: Methenyltetrahydrofolate synthase domain-containing protein (380 aa).

Basic and acidic residues predominate over residues 245-258; that stretch reads EEQAGKDVTLRDGP. Disordered stretches follow at residues 245–283 and 361–380; these read EEQA…PLSS and LVGS…IAGP. The 74-residue stretch at 282–355 folds into the RRM domain; it reads SSVQIGNLPR…NTVRVVLARQ (74 aa).

The chain is Methenyltetrahydrofolate synthase domain-containing protein (MTHFSD) from Bos taurus (Bovine).